A 629-amino-acid polypeptide reads, in one-letter code: 1-deoxy-D-xylulose-5-phosphate synthase (629 aa).

Thiamine diphosphate-binding positions include histidine 78 and 119–121 (AHS). Aspartate 150 provides a ligand contact to Mg(2+). Thiamine diphosphate contacts are provided by residues 151–152 (GA), asparagine 179, tyrosine 286, and glutamate 368. Mg(2+) is bound at residue asparagine 179.

It belongs to the transketolase family. DXPS subfamily. Homodimer. The cofactor is Mg(2+). Thiamine diphosphate serves as cofactor.

The enzyme catalyses D-glyceraldehyde 3-phosphate + pyruvate + H(+) = 1-deoxy-D-xylulose 5-phosphate + CO2. Its pathway is metabolic intermediate biosynthesis; 1-deoxy-D-xylulose 5-phosphate biosynthesis; 1-deoxy-D-xylulose 5-phosphate from D-glyceraldehyde 3-phosphate and pyruvate: step 1/1. Catalyzes the acyloin condensation reaction between C atoms 2 and 3 of pyruvate and glyceraldehyde 3-phosphate to yield 1-deoxy-D-xylulose-5-phosphate (DXP). The sequence is that of 1-deoxy-D-xylulose-5-phosphate synthase from Acidovorax ebreus (strain TPSY) (Diaphorobacter sp. (strain TPSY)).